The chain runs to 421 residues: D-inositol 3-phosphate glycosyltransferase (421 aa).

Position 13 (His13) interacts with 1D-myo-inositol 3-phosphate. Residues 19–20 (QP) and Gly27 each bind UDP-N-acetyl-alpha-D-glucosamine. Residues 24–29 (DAGGMN), Lys82, Tyr115, Thr139, and Arg159 contribute to the 1D-myo-inositol 3-phosphate site. Residues Arg233, Lys238, and Val294 each coordinate UDP-N-acetyl-alpha-D-glucosamine. Positions 303, 304, and 306 each coordinate Mg(2+). Positions 316 and 324 each coordinate UDP-N-acetyl-alpha-D-glucosamine. Thr330 lines the Mg(2+) pocket.

This sequence belongs to the glycosyltransferase group 1 family. MshA subfamily. In terms of assembly, homodimer.

It carries out the reaction 1D-myo-inositol 3-phosphate + UDP-N-acetyl-alpha-D-glucosamine = 1D-myo-inositol 2-acetamido-2-deoxy-alpha-D-glucopyranoside 3-phosphate + UDP + H(+). Catalyzes the transfer of a N-acetyl-glucosamine moiety to 1D-myo-inositol 3-phosphate to produce 1D-myo-inositol 2-acetamido-2-deoxy-glucopyranoside 3-phosphate in the mycothiol biosynthesis pathway. The polypeptide is D-inositol 3-phosphate glycosyltransferase (Arthrobacter sp. (strain FB24)).